A 554-amino-acid chain; its full sequence is uncharacterized protein (554 aa).

Positions Met-1–Ser-33 are cleaved as a signal peptide.

This is an uncharacterized protein from Rickettsia prowazekii (strain Madrid E).